A 610-amino-acid polypeptide reads, in one-letter code: Peptidyl-prolyl cis-trans isomerase 9 (610 aa).

Phosphoserine is present on Ser-13. 3 WD repeats span residues Met-45–Ile-83, Ala-88–Ile-127, and Lys-177–Asp-216. One can recognise a PPIase cyclophilin-type domain in the interval Leu-453–Ile-607.

This sequence belongs to the cyclophilin-type PPIase family.

The protein resides in the nucleus. It carries out the reaction [protein]-peptidylproline (omega=180) = [protein]-peptidylproline (omega=0). PPIases accelerate the folding of proteins. It catalyzes the cis-trans isomerization of proline imidic peptide bonds in oligopeptides. The polypeptide is Peptidyl-prolyl cis-trans isomerase 9 (cyp9) (Schizosaccharomyces pombe (strain 972 / ATCC 24843) (Fission yeast)).